Reading from the N-terminus, the 1340-residue chain is Thioester-containing protein 1 allele S1 (1340 aa).

The first 21 residues, 1 to 21 (MWQFIRSRILTVIIFIGAAHG), serve as a signal peptide directing secretion. N-linked (GlcNAc...) asparagine glycosylation is found at N68, N199, N242, N312, and N481. The tract at residues 580–609 (ENEFDIFHSLGLFARTLDDILFDSANEKTG) is may contain the cleavage site. 4 N-linked (GlcNAc...) asparagine glycosylation sites follow: N637, N728, N813, and N828. Positions 859-862 (CGEQ) form a cross-link, isoglutamyl cysteine thioester (Cys-Gln). Disulfide bonds link C1217–C1283, C1326–C1338, and C1329–C1334.

In terms of assembly, heterodimer of a TEP1-N chain and an TEP1-C chain non-covalently linked. Forms a complex composed of TEP1-N and TEP1-C heterodimer, LRIM1 and APL1C; the interaction stabilizes TEP1-N and TEP1-C heterodimer, prevents its binding to tissues while circulating in the hemolymph and protects the thioester bond from hydrolysis. Mature TEP1 and to a lesser extent full-length TEP1 interact with SPCLIP1; the interaction is induced by microbial infection. In terms of processing, in the hemolymph, the full-length protein is cleaved by an unknow protease into a 75kDa N-terminal (TEP1-N) chain and an 80kDa C-terminal (TEP1-C) chain which remain non-covalently linked. The TEP1-C chain contains the thioester bond which covalently binds to the pathogen surface. Cleavage is induced by bacterial infection or aseptic wound injury. During embryonic and pupal development, the cleaved form is the predominant form. Post-translationally, N-glycosylated. Specifically expressed in hemocytes (at protein level).

The protein resides in the secreted. Its function is as follows. Plays an essential role in the innate immune response to bacteria and protozoa infection. After proteolytic cleavage, the protein C-terminus binds covalently through a thioester bond to the pathogen surface resulting in pathogen clearance either by melanization or lysis. Initiate the recruitment and activation of a cascade of proteases, mostly of CLIP-domain serine proteases, which leads to the proteolytic cleavage of the prophenoloxidase (PPO) into active phenoloxidase (PO), the rate-limiting enzyme in melanin biosynthesis. In response to parasite P.berghei-mediated infection, binds to and mediates killing of ookinetes, as they egress from midgut epithelial cells into the basal labyrinth, by both lysis and melanization. During bacterial infection, binds to both Gram-positive and Gram-negative bacteria but only promotes phagocytosis of Gram-negative bacteria. Promotes the accumulation of SPCLIP1 onto the surface of P.berghei ookinetes and bacterium E.coli which leads to the melanization of the pathogen. Recruits CLIPA2 to bacteria surface. In response to bacterial infection, required for periostial hemocyte aggregation, but not for the aggregation of sessile hemocytes in non-periostial regions. During the late stage of fungus B.bassiana-mediated infection, required for the initiation of hyphae melanization by binding to the surface of hyphae and recruiting prophenoloxidase PPO to them. Plays a role in male fertility by binding to defective sperm cells and promoting their removal during spermatogenesis. In terms of biological role, binds covalently through a thioester bond to the pathogen surface resulting in pathogen clearance. This is Thioester-containing protein 1 allele S1 from Anopheles gambiae (African malaria mosquito).